Here is a 941-residue protein sequence, read N- to C-terminus: MSSEFLAELHWEDGFAIPVANEENKLLEDQLSKLKDERASLQDELREYEERINSMTSHFKNVKQELSITQSLCKARERETESEEHFKAIAQRELGRVKDEIQRLENEMASILEKKSDKENGIFKATQKLDGLKCQMNWDQQALEAWLEESAHKDSDALTLQKYAQQDDNKIRALTLQLERLTLECNQKRKILDNELTETISAQLELDKAAQDFRKIHNERQELIKQWENTIEQMQKRDGDIDNCALELARIKQETREKENLVKEKIKFLESEIGNNTEFEKRISVADRKLLKCRTAYQDHETSRIQLKGELDSLKATVNRTSSDLEALRKNISKIKKDIHEETARLQKTKNHNEIIQTKLKEITEKTMSVEEKATNLEDMLKEEEKDVKEVDVQLNLIKGVLFKKAQELQTETMKEKAVLSEIEGTRSSLKHLNHQLQKLDFETLKQQEIMYSQDFHIQQVERRMSRLKGEINSEEKQALEAKIVELRKSLEEKKSTCGLLETQIKKLHNDLYFIKKAHSKNSDEKQSLMTKINELNLFIDRSEKELDKAKGFKQDLMIEDNLLKLEVKRTREMLHSKAEEVLSLEKRKQQLYTAMEERTEEIKVHKTMLASQIRYVDQERENISTEFRERLSKIEKLKNRYEILTVVMLPPEGEEEKTQAYYVIKAAQEKEELQREGDCLDAKINKAEKEIYALENTLQVLNSCNNNYKQSFKKVTPSSDEYELKIQLEEQKRAVDEKYRYKQRQIRELQEDIQSMENTLDVIEHLANNVKEKLSEKQAYSFQLSKETEEQKPKLERVTKQCAKLTKEIRLLKDTKDETMEEQDIKLREMKQFHKVIDEMLVDIIEENTEIRIILQTYFQQSGLELPTASTKGSRQSSRSPSHTSLSARSSRSTSTSTSQSSIKVLELKFPASSSLVGSPSRPSSASSSSSNVKSKKSSK.

Coiled coils occupy residues 16–122 (AIPV…ENGI), 164–273 (AQQD…ESEI), 306–605 (QLKG…EIKV), and 665–825 (IKAA…EEQD). The segment at 868–941 (PTASTKGSRQ…SNVKSKKSSK (74 aa)) is disordered. Composition is skewed to low complexity over residues 871–903 (STKG…SQSS) and 914–934 (SSSL…SSNV). Residues S892 and S900 each carry the phosphoserine modification.

Belongs to the CCDC39 family. Mainly expressed in nasal brushings and, to a lesser extent, in lungs and testis.

Its subcellular location is the cytoplasm. The protein localises to the cytoskeleton. It is found in the cilium axoneme. Its function is as follows. Required for assembly of dynein regulatory complex (DRC) and inner dynein arm (IDA) complexes, which are responsible for ciliary beat regulation, thereby playing a central role in motility in cilia and flagella. Probably acts together with CCDC40 to form a molecular ruler that determines the 96 nanometer (nm) repeat length and arrangements of components in cilia and flagella. Not required for outer dynein arm complexes assembly. This is Coiled-coil domain-containing protein 39 from Homo sapiens (Human).